The primary structure comprises 292 residues: Bis(5'-nucleosyl)-tetraphosphatase, symmetrical (292 aa).

It belongs to the Ap4A hydrolase family.

It carries out the reaction P(1),P(4)-bis(5'-adenosyl) tetraphosphate + H2O = 2 ADP + 2 H(+). Its function is as follows. Hydrolyzes diadenosine 5',5'''-P1,P4-tetraphosphate to yield ADP. The sequence is that of Bis(5'-nucleosyl)-tetraphosphatase, symmetrical from Yersinia enterocolitica serotype O:8 / biotype 1B (strain NCTC 13174 / 8081).